We begin with the raw amino-acid sequence, 161 residues long: Small ribosomal subunit protein uS15 (161 aa).

Positions 1–13 (MAGKRRKKGRSHS) are enriched in basic residues. Residues 1-22 (MAGKRRKKGRSHSTRPATPTVP) are disordered.

It belongs to the universal ribosomal protein uS15 family. Part of the 30S ribosomal subunit.

In Hyperthermus butylicus (strain DSM 5456 / JCM 9403 / PLM1-5), this protein is Small ribosomal subunit protein uS15.